Here is a 312-residue protein sequence, read N- to C-terminus: Malate dehydrogenase (312 aa).

Residues 7–13 (GAAGGIG) and D34 contribute to the NAD(+) site. The substrate site is built by R81 and R87. NAD(+) is bound by residues N94 and 117–119 (ITN). Substrate contacts are provided by N119 and R153. H177 (proton acceptor) is an active-site residue. Residue M227 coordinates NAD(+).

It belongs to the LDH/MDH superfamily. MDH type 1 family. As to quaternary structure, homodimer.

The catalysed reaction is (S)-malate + NAD(+) = oxaloacetate + NADH + H(+). Its function is as follows. Catalyzes the reversible oxidation of malate to oxaloacetate. The polypeptide is Malate dehydrogenase (Klebsiella pneumoniae (strain 342)).